We begin with the raw amino-acid sequence, 665 residues long: Phenol hydroxylase (665 aa).

Residues 18-19, 43-45, 51-56, Q118, Y290, D358, and 368-372 contribute to the FAD site; these read PA, DKR, NGQADG, and GQGMN. Substrate is bound at residue D55. Y290 provides a ligand contact to substrate.

This sequence belongs to the PheA/TfdB FAD monooxygenase family. As to quaternary structure, homodimer. FAD is required as a cofactor.

The enzyme catalyses phenol + NADPH + O2 + H(+) = catechol + NADP(+) + H2O. Its pathway is aromatic compound metabolism; phenol degradation. With respect to regulation, inhibited by excess phenol. Heavy metals such AsCuSO(4), AgNO(3), or HgCl(2) severely inhibit activity. In terms of biological role, hydroxylates phenol to catechol. Phenol is the best substrate, but the enzyme also accepts isomeric diphenols, hydroxyl-, amino-, halogen- or methyl-substituted phenols and, to a lesser degree, cresols. The sequence is that of Phenol hydroxylase from Cutaneotrichosporon cutaneum (Yeast).